Consider the following 186-residue polypeptide: Putative transcriptional regulator encoded by LINC00473 (186 aa).

The disordered stretch occupies residues 1 to 62 (MELSAAAGRR…RDCTPTCTNA (62 aa)). Over residues 18-40 (FTGRHRTERSQERGSTPRKERSM) the composition is skewed to basic and acidic residues.

May play a role in cAMP-mediated gene transcription. The protein is Putative transcriptional regulator encoded by LINC00473 (LINC00473) of Homo sapiens (Human).